Consider the following 268-residue polypeptide: NH(3)-dependent NAD(+) synthetase (268 aa).

46–53 (GVSGGQDS) is an ATP binding site. A Mg(2+)-binding site is contributed by Asp52. Arg140 provides a ligand contact to deamido-NAD(+). Thr160 contacts ATP. Glu165 lines the Mg(2+) pocket. Deamido-NAD(+) is bound by residues Lys173 and Asp180. Lys189 provides a ligand contact to ATP. 260 to 261 (HK) is a binding site for deamido-NAD(+).

This sequence belongs to the NAD synthetase family. In terms of assembly, homodimer.

It carries out the reaction deamido-NAD(+) + NH4(+) + ATP = AMP + diphosphate + NAD(+) + H(+). It participates in cofactor biosynthesis; NAD(+) biosynthesis; NAD(+) from deamido-NAD(+) (ammonia route): step 1/1. Its function is as follows. Catalyzes the ATP-dependent amidation of deamido-NAD to form NAD. Uses ammonia as a nitrogen source. The polypeptide is NH(3)-dependent NAD(+) synthetase (Buchnera aphidicola subsp. Acyrthosiphon pisum (strain Tuc7)).